A 462-amino-acid chain; its full sequence is MANRIEADNLFELTAELVSASAKLHKFLDQKNLPQPSFDAPAPSVALNTANKPYYDARSAIVEAAEQLIRLVRGPRDTLLALSFEHCATASMQVVFKYKFANHIPLHGSTTYSKIAEAVGDGVTTALVERTIQHCASFGLFETIPGGYVTHNATSSLLVTDPDLEAWMYLSAVIAYPAGAAIPKAVEQYGVSSEATEAGYGVSIGRKIAQFQRFREPDGKKDHEMFARAMRGIAAGGAYDFRHAVDGGYPWHLLTEGAGHLVVDVGGGPGHVAMALAEKYPSLRFQVQDLPETVQVGAKNCPEHLRKHVTFVAHDFMTPQPAHEVQDGEGIVYFARFILHDWSDKYATKIVQALATGLRPQDRIILNEVVVPEAGQVGRETERRMHDRDLLMLMNLNGRERTQSAFEAIFASVTPKLRLQRVIHPEQGELSLIEVTLDGVELPAQANGVNGHANGTNGVNGH.

Residue Asp289 participates in S-adenosyl-L-methionine binding. His340 serves as the catalytic Proton acceptor.

The protein belongs to the class I-like SAM-binding methyltransferase superfamily. Cation-independent O-methyltransferase family. COMT subfamily.

It functions in the pathway mycotoxin biosynthesis. In terms of biological role, O-methyltransferase; part of the gene cluster that mediates the biosynthesis of cercosporin, a light-activated, non-host-selective toxin. The perylenequinone chromophore of cercosporin absorbs light energy to attain an electronically-activated triplet state and produces active oxygen species such as the hydroxyl radical, superoxide, hydrogen peroxide or singlet oxygen upon reaction with oxygen molecules. These reactive oxygen species cause damage to various cellular components including lipids, proteins and nucleic acids. The first step of cercosporin biosynthesis is performed by the polyketide synthase CTB1 which catalyzes the formation of nor-toralactone. The starter unit acyltransferase (SAT) domain of CTB1 initiates polyketide extension by the selective utilization of acetyl-CoA, which is elongated to the heptaketide in the beta-ketoacyl synthase (KS) domain by successive condensations with six malonyl units introduced by the malonyl acyltransferase (MAT) domain. The product template (PT) domain catalyzes C4-C9 and C2-C11 aldol cyclizations and dehydrations to a trihydroxynaphthalene, which is thought to be delivered to the thioesterase (TE) domain for product release. The bifunctional enzyme CTB3 then methylates nor-toralactone to toralactone before conducting an unusual oxidative aromatic ring opening. The O-methyltransferase CTB2 further methylates the nascent OH-6 of the CBT3 product, blocking further oxidation at this site before the reductase CTB6 reduces the 2-oxopropyl ketone at position C7, giving naphthalene. The FAD-dependent monooxygenase CTB5 in concert with the multicopper oxidase CTB12 are responsible for homodimerization of naphthalene with CTB7 installing the dioxepine moiety, finally producing cercosporin. The fasciclin domain-containing protein CTB11 might act with CTB5 and CTB12 whereas the roles of CTB9 and CTB10 have still to be elucidated. The sequence is that of O-methyltransferase CTB2 from Cercospora beticola (Sugarbeet leaf spot fungus).